Reading from the N-terminus, the 357-residue chain is Ubiquitin carboxyl-terminal hydrolase 2 (357 aa).

In terms of domain architecture, USP spans 19–351 (TGLRNLGNTC…DAYLLFYELA (333 aa)). Residue Cys28 is the Nucleophile of the active site. The Zn(2+) site is built by Cys177, Cys180, Cys228, and Cys231. The Proton acceptor role is filled by His309.

Belongs to the peptidase C19 family. USP2 subfamily. In terms of assembly, homooligomer.

The protein resides in the cytoplasm. It is found in the perinuclear region. It carries out the reaction Thiol-dependent hydrolysis of ester, thioester, amide, peptide and isopeptide bonds formed by the C-terminal Gly of ubiquitin (a 76-residue protein attached to proteins as an intracellular targeting signal).. Functionally, hydrolase that deubiquitinates polyubiquitinated target proteins such as MDM2, MDM4 and CCND1. Possesses both ubiquitin-specific peptidase and isopeptidase activities. May play a role in the regulation of the circadian clock. The chain is Ubiquitin carboxyl-terminal hydrolase 2 (USP2) from Gallus gallus (Chicken).